We begin with the raw amino-acid sequence, 23 residues long: Protein DCL, chloroplastic (23 aa).

The protein localises to the plastid. It is found in the chloroplast. Has a function in the early stage of chloroplast development and palisade cell morphogenesis. The polypeptide is Protein DCL, chloroplastic (Pseudotsuga menziesii (Douglas-fir)).